A 316-amino-acid chain; its full sequence is MKKAVILLNMGGPSSLLEVDMFLKNMFNDPRILPIKSPFFRSLVASFIANRRSETAKANYRKIGGKSPLIGHTFNLIQKLQSLDPSRFYTYAMRYTPPMTDMAVRELAQKEIEEVTLFSLYPQYSTTTTLSSIEEFHKQCALLSYFPKTKEIDRYFEDSNYNEAIIDRILEALGGDNPEEFTLIFSAHGLPQSVIDAGDPYEKEVHANIQALTKLLEERGITFKKITHAYQSKVGPMKWLEPSLDEVLKLHAKEKILLYPIAFTLDNSETDFELRIEYQEKATHLGITDYRVASCLNDSTRFAHAIIKLISQGEIS.

Residues histidine 188 and glutamate 269 each coordinate Fe cation.

Belongs to the ferrochelatase family.

It localises to the cytoplasm. It carries out the reaction heme b + 2 H(+) = protoporphyrin IX + Fe(2+). It functions in the pathway porphyrin-containing compound metabolism; protoheme biosynthesis; protoheme from protoporphyrin-IX: step 1/1. Catalyzes the ferrous insertion into protoporphyrin IX. In Wolinella succinogenes (strain ATCC 29543 / DSM 1740 / CCUG 13145 / JCM 31913 / LMG 7466 / NCTC 11488 / FDC 602W) (Vibrio succinogenes), this protein is Ferrochelatase.